The chain runs to 75 residues: Peptide Ctri10036 (75 aa).

Residues 1 to 22 (MNSKYLFVFLILNVIFIDLCQG) form the signal peptide. The residue at position 41 (Lys41) is a Lysine amide. A propeptide spanning residues 47 to 75 (ELGSQYDYLQDFRKRELDLDDLLSKFPDY) is cleaved from the precursor.

This sequence belongs to the non-disulfide-bridged peptide (NDBP) superfamily. Short antimicrobial peptide (group 4) family. As to expression, expressed by the venom gland.

The protein localises to the secreted. The sequence is that of Peptide Ctri10036 from Chaerilus tricostatus (Scorpion).